The primary structure comprises 807 residues: Histone transcription regulator slm9 (807 aa).

WD repeat units follow at residues 62–100 (SFDSPISCIRFTYDGSCLAVATEAGTFLYHSEKWDKAFQ) and 102–140 (LSGPAYEVCWSQQGHILATSWKQISIYVKDEGLRTETIV). The tract at residues 144 to 164 (EHADSNHQPAVSIEESKEAVE) is disordered. 4 WD repeats span residues 182–221 (GHHTFVGGLAFDPMGQFLASQSFDHTLKVWKLSTFGVEKS), 230–273 (PTGN…YDIN), 276–322 (GHQG…PMAV), and 326–367 (LSCS…EKMD). The interval 388–437 (NKNAAADRTTSPTQGQPESPSKSILLRPPPSIASSPESKRRKCPKKFVAR) is disordered. Polar residues predominate over residues 395–409 (RTTSPTQGQPESPSK). 3 positions are modified to phosphoserine: S406, S421, and S422. Residues 426–435 (KRRKCPKKFV) are compositionally biased toward basic residues. 2 WD repeats span residues 492–526 (DCSWFSYLPNAIVLANGTSVFWAVATEDSSIYIYS) and 528–574 (AGRL…AIHS).

It belongs to the WD repeat HIR1 family. Interacts with hip1 and hip3.

It localises to the cytoplasm. The protein resides in the nucleus. In terms of biological role, probably required for replication-independent chromatin assembly. Required for transcriptional silencing in the outer repeat (otr) centromeric repeats and the Tf2 long terminal repeat retrotransposons. May play an indirect role in the regulation of cdc2 and/or wee1 at the G2/M stage of mitosis. This Schizosaccharomyces pombe (strain 972 / ATCC 24843) (Fission yeast) protein is Histone transcription regulator slm9 (slm9).